We begin with the raw amino-acid sequence, 496 residues long: Glycerol kinase (496 aa).

Position 12 (Thr-12) interacts with ADP. ATP-binding residues include Thr-12, Thr-13, and Ser-14. A sn-glycerol 3-phosphate-binding site is contributed by Thr-12. Residue Arg-16 coordinates ADP. 3 residues coordinate sn-glycerol 3-phosphate: Arg-82, Glu-83, and Tyr-134. Glycerol contacts are provided by Arg-82, Glu-83, and Tyr-134. His-230 is subject to Phosphohistidine; by HPr. Asp-244 provides a ligand contact to sn-glycerol 3-phosphate. The glycerol site is built by Asp-244 and Gln-245. Residues Thr-266 and Gly-309 each contribute to the ADP site. Thr-266, Gly-309, Gln-313, and Gly-410 together coordinate ATP. ADP contacts are provided by Gly-410 and Asn-414.

It belongs to the FGGY kinase family. As to quaternary structure, homotetramer and homodimer (in equilibrium). Post-translationally, the phosphoenolpyruvate-dependent sugar phosphotransferase system (PTS), including enzyme I, and histidine-containing protein (HPr) are required for the phosphorylation, which leads to the activation of the enzyme.

The enzyme catalyses glycerol + ATP = sn-glycerol 3-phosphate + ADP + H(+). The protein operates within polyol metabolism; glycerol degradation via glycerol kinase pathway; sn-glycerol 3-phosphate from glycerol: step 1/1. With respect to regulation, activated by phosphorylation and inhibited by fructose 1,6-bisphosphate (FBP). Key enzyme in the regulation of glycerol uptake and metabolism. Catalyzes the phosphorylation of glycerol to yield sn-glycerol 3-phosphate. This Bacillus cereus (strain Q1) protein is Glycerol kinase.